A 38-amino-acid chain; its full sequence is Cytochrome b6-f complex subunit 5 (38 aa).

The chain crosses the membrane as a helical span at residues 5 to 25 (LLLGIVLGLIPVTLAGLFVAA).

It belongs to the PetG family. In terms of assembly, the 4 large subunits of the cytochrome b6-f complex are cytochrome b6, subunit IV (17 kDa polypeptide, PetD), cytochrome f and the Rieske protein, while the 4 small subunits are PetG, PetL, PetM and PetN. The complex functions as a dimer.

The protein localises to the cellular thylakoid membrane. Component of the cytochrome b6-f complex, which mediates electron transfer between photosystem II (PSII) and photosystem I (PSI), cyclic electron flow around PSI, and state transitions. PetG is required for either the stability or assembly of the cytochrome b6-f complex. The sequence is that of Cytochrome b6-f complex subunit 5 from Picosynechococcus sp. (strain ATCC 27264 / PCC 7002 / PR-6) (Agmenellum quadruplicatum).